We begin with the raw amino-acid sequence, 408 residues long: MRGGLWQLGQSITRRLANGGDKKAVARRCFATESELKKTVLYDFHVAHGGKMVPFAGWSMPIQYKDSIMDSTLNCRQNGSLFDVSHMCGLSLKGKDVVSFLEKLVIADVAALAHGTGTLTVFTNEKGGAIDDSVITKVTDDHLYLVVNAGCRDKDLAHIEEHMKAFKAKGGDVSWHIHDERSLLALQGPLAAPVLQHLTKEDLSKLYFGEFRVLDINGSQCFLTRTGYTGEDGFEISVPSEHGVELAKALLEKSEGKIRLTGLGARDSLRLEAGLCLYGNDLEQHITPIEAGLTWAIGKRRRAEGGFLGADVILKQLADGPSIRRVGFISSGPPPRSHSEIQDEGGNNIGEVTSGGFSPCLKKNIAIGYVKSGLHKAGTKVKIIIRGKQNEGVVTKMPFVPTKYYKPS.

The transit peptide at 1-30 (MRGGLWQLGQSITRRLANGGDKKAVARRCF) directs the protein to the mitochondrion. Substrate-binding residues include Glu235, Arg266, and Tyr404.

It belongs to the GcvT family. The glycine cleavage system is composed of four proteins: P, T, L and H.

It localises to the mitochondrion. It catalyses the reaction N(6)-[(R)-S(8)-aminomethyldihydrolipoyl]-L-lysyl-[protein] + (6S)-5,6,7,8-tetrahydrofolate = N(6)-[(R)-dihydrolipoyl]-L-lysyl-[protein] + (6R)-5,10-methylene-5,6,7,8-tetrahydrofolate + NH4(+). The glycine cleavage system catalyzes the degradation of glycine. The sequence is that of Aminomethyltransferase, mitochondrial (GDCST) from Pisum sativum (Garden pea).